Consider the following 79-residue polypeptide: D-alanyl carrier protein (79 aa).

A Carrier domain is found at 1-77 (MDVKAEVIEI…KIVEGVTELR (77 aa)). The residue at position 35 (serine 35) is an O-(pantetheine 4'-phosphoryl)serine.

Belongs to the DltC family. Post-translationally, 4'-phosphopantetheine is transferred from CoA to a specific serine of apo-DCP.

The protein localises to the cytoplasm. It participates in cell wall biogenesis; lipoteichoic acid biosynthesis. Carrier protein involved in the D-alanylation of lipoteichoic acid (LTA). The loading of thioester-linked D-alanine onto DltC is catalyzed by D-alanine--D-alanyl carrier protein ligase DltA. The DltC-carried D-alanyl group is further transferred to cell membrane phosphatidylglycerol (PG) by forming an ester bond, probably catalyzed by DltD. D-alanylation of LTA plays an important role in modulating the properties of the cell wall in Gram-positive bacteria, influencing the net charge of the cell wall. In Streptococcus thermophilus (strain CNRZ 1066), this protein is D-alanyl carrier protein.